A 176-amino-acid polypeptide reads, in one-letter code: Ribosome maturation factor RimM (176 aa).

The 80-residue stretch at 97-176 (EDEFYWRDLI…QITVDWDPDF (80 aa)) folds into the PRC barrel domain.

The protein belongs to the RimM family. In terms of assembly, binds ribosomal protein uS19.

It localises to the cytoplasm. Functionally, an accessory protein needed during the final step in the assembly of 30S ribosomal subunit, possibly for assembly of the head region. Essential for efficient processing of 16S rRNA. May be needed both before and after RbfA during the maturation of 16S rRNA. It has affinity for free ribosomal 30S subunits but not for 70S ribosomes. The chain is Ribosome maturation factor RimM from Shewanella sediminis (strain HAW-EB3).